The following is a 268-amino-acid chain: Ribosomal RNA small subunit methyltransferase A (268 aa).

6 residues coordinate S-adenosyl-L-methionine: Asn18, Leu20, Gly45, Glu66, Asp91, and Asn112.

The protein belongs to the class I-like SAM-binding methyltransferase superfamily. rRNA adenine N(6)-methyltransferase family. RsmA subfamily.

It localises to the cytoplasm. The catalysed reaction is adenosine(1518)/adenosine(1519) in 16S rRNA + 4 S-adenosyl-L-methionine = N(6)-dimethyladenosine(1518)/N(6)-dimethyladenosine(1519) in 16S rRNA + 4 S-adenosyl-L-homocysteine + 4 H(+). Specifically dimethylates two adjacent adenosines (A1518 and A1519) in the loop of a conserved hairpin near the 3'-end of 16S rRNA in the 30S particle. May play a critical role in biogenesis of 30S subunits. The chain is Ribosomal RNA small subunit methyltransferase A from Pseudoalteromonas translucida (strain TAC 125).